An 883-amino-acid polypeptide reads, in one-letter code: Bifunctional heparan sulfate N-deacetylase/N-sulfotransferase 2 (883 aa).

At 1-18 (MLQLWKVVRPARQLELHR) the chain is on the cytoplasmic side. A helical; Signal-anchor for type II membrane protein transmembrane segment spans residues 19-39 (LILLLIGFSLVSMGFLAYYVS). Over 40-883 (TSPKAKEPLP…REELQHSSVG (844 aa)) the chain is Lumenal. The tract at residues 41–597 (SPKAKEPLPL…KRHKDIWSKE (557 aa)) is heparan sulfate N-deacetylase 2. Residues 49–82 (PLPLGDCSSSGAAGPGPARPPVPPRPQRPPETTR) form a disordered region. A compositionally biased stretch (pro residues) spans 65–77 (PARPPVPPRPQRP). 3 N-linked (GlcNAc...) asparagine glycosylation sites follow: Asn-233, Asn-350, and Asn-400. The segment at 598 to 883 (KTCDRLPKFL…REELQHSSVG (286 aa)) is heparan sulfate N-sulfotransferase 2. The active-site For sulfotransferase activity is Lys-613. 613-617 (KTGTT) is a 3'-phosphoadenylyl sulfate binding site. N-linked (GlcNAc...) asparagine glycosylation is present at Asn-666. Residue Ser-711 coordinates 3'-phosphoadenylyl sulfate. 2 N-linked (GlcNAc...) asparagine glycosylation sites follow: Asn-726 and Asn-802. A disulfide bridge connects residues Cys-817 and Cys-827. 832 to 836 (KGRRY) provides a ligand contact to 3'-phosphoadenylyl sulfate.

The protein belongs to the sulfotransferase 1 family. NDST subfamily. Monomer. As to expression, widely expressed in adult and throughout development.

The protein localises to the golgi apparatus membrane. It carries out the reaction alpha-D-glucosaminyl-[heparan sulfate](n) + 3'-phosphoadenylyl sulfate = N-sulfo-alpha-D-glucosaminyl-[heparan sulfate](n) + adenosine 3',5'-bisphosphate + 2 H(+). The protein operates within glycan metabolism; heparan sulfate biosynthesis. It functions in the pathway glycan metabolism; heparin biosynthesis. Functionally, essential bifunctional enzyme that catalyzes both the N-deacetylation and the N-sulfation of glucosamine (GlcNAc) of the glycosaminoglycan in heparan sulfate. Modifies the GlcNAc-GlcA disaccharide repeating sugar backbone to make N-sulfated heparosan, a prerequisite substrate for later modifications in heparin biosynthesis. Plays a role in determining the extent and pattern of sulfation of heparan sulfate. Required for the exosomal release of SDCBP, CD63 and syndecan. The sequence is that of Bifunctional heparan sulfate N-deacetylase/N-sulfotransferase 2 (Ndst2) from Mus musculus (Mouse).